Consider the following 264-residue polypeptide: uncharacterized protein (264 aa).

An N-terminal signal peptide occupies residues 1-22 (MKSIKRIGLCISLLILIIFVTS). Cys23 carries the N-palmitoyl cysteine lipid modification. Cys23 is lipidated: S-diacylglycerol cysteine.

It belongs to the staphylococcal tandem lipoprotein family.

Its subcellular location is the cell membrane. This is an uncharacterized protein from Staphylococcus aureus (strain MRSA252).